A 513-amino-acid polypeptide reads, in one-letter code: Glutamate--tRNA ligase 2 (513 aa).

A 'HIGH' region motif is present at residues 11 to 21; that stretch reads PSPTGFLHIGS. A 'KMSKS' region motif is present at residues 240-244; sequence KLSKR. Residue Lys-243 participates in ATP binding.

Belongs to the class-I aminoacyl-tRNA synthetase family. Glutamate--tRNA ligase type 1 subfamily. As to quaternary structure, monomer.

The protein resides in the cytoplasm. The enzyme catalyses tRNA(Glu) + L-glutamate + ATP = L-glutamyl-tRNA(Glu) + AMP + diphosphate. Its function is as follows. Catalyzes the attachment of glutamate to tRNA(Glu) in a two-step reaction: glutamate is first activated by ATP to form Glu-AMP and then transferred to the acceptor end of tRNA(Glu). The sequence is that of Glutamate--tRNA ligase 2 from Rickettsia rickettsii (strain Iowa).